Here is a 242-residue protein sequence, read N- to C-terminus: UDP-2,3-diacylglucosamine hydrolase (242 aa).

Mn(2+)-binding residues include Asp9, His11, Asp42, Asn79, and His114. 79 to 80 (NR) is a binding site for substrate. The substrate site is built by Asp122, Ser160, Asn164, Lys167, and His195. Residues His195 and His197 each coordinate Mn(2+).

Belongs to the LpxH family. The cofactor is Mn(2+).

It localises to the cell inner membrane. The enzyme catalyses UDP-2-N,3-O-bis[(3R)-3-hydroxytetradecanoyl]-alpha-D-glucosamine + H2O = 2-N,3-O-bis[(3R)-3-hydroxytetradecanoyl]-alpha-D-glucosaminyl 1-phosphate + UMP + 2 H(+). It participates in glycolipid biosynthesis; lipid IV(A) biosynthesis; lipid IV(A) from (3R)-3-hydroxytetradecanoyl-[acyl-carrier-protein] and UDP-N-acetyl-alpha-D-glucosamine: step 4/6. Functionally, hydrolyzes the pyrophosphate bond of UDP-2,3-diacylglucosamine to yield 2,3-diacylglucosamine 1-phosphate (lipid X) and UMP by catalyzing the attack of water at the alpha-P atom. Involved in the biosynthesis of lipid A, a phosphorylated glycolipid that anchors the lipopolysaccharide to the outer membrane of the cell. In Shewanella loihica (strain ATCC BAA-1088 / PV-4), this protein is UDP-2,3-diacylglucosamine hydrolase.